A 430-amino-acid chain; its full sequence is Adenylosuccinate synthetase (430 aa).

GTP contacts are provided by residues 13–19 and 41–43; these read GDEGKGK and GHT. Catalysis depends on D14, which acts as the Proton acceptor. 2 residues coordinate Mg(2+): D14 and G41. IMP-binding positions include 14-17, 39-42, T130, R144, Q225, T240, and R304; these read DEGK and NAGH. The active-site Proton donor is the H42. 300-306 serves as a coordination point for substrate; the sequence is ATTGRKR. GTP-binding positions include R306, 332-334, and 414-416; these read KLD and STG.

It belongs to the adenylosuccinate synthetase family. Homodimer. Mg(2+) serves as cofactor.

The protein resides in the cytoplasm. It catalyses the reaction IMP + L-aspartate + GTP = N(6)-(1,2-dicarboxyethyl)-AMP + GDP + phosphate + 2 H(+). Its pathway is purine metabolism; AMP biosynthesis via de novo pathway; AMP from IMP: step 1/2. Its function is as follows. Plays an important role in the de novo pathway of purine nucleotide biosynthesis. Catalyzes the first committed step in the biosynthesis of AMP from IMP. In Teredinibacter turnerae (strain ATCC 39867 / T7901), this protein is Adenylosuccinate synthetase.